The following is a 214-amino-acid chain: FMN-dependent NADH:quinone oxidoreductase 1 (214 aa).

FMN-binding positions include 17 to 19 (SWS) and 144 to 147 (SAGG).

This sequence belongs to the azoreductase type 1 family. As to quaternary structure, homodimer. The cofactor is FMN.

It carries out the reaction 2 a quinone + NADH + H(+) = 2 a 1,4-benzosemiquinone + NAD(+). The catalysed reaction is N,N-dimethyl-1,4-phenylenediamine + anthranilate + 2 NAD(+) = 2-(4-dimethylaminophenyl)diazenylbenzoate + 2 NADH + 2 H(+). Functionally, quinone reductase that provides resistance to thiol-specific stress caused by electrophilic quinones. In terms of biological role, also exhibits azoreductase activity. Catalyzes the reductive cleavage of the azo bond in aromatic azo compounds to the corresponding amines. In Lactococcus lactis subsp. lactis (strain IL1403) (Streptococcus lactis), this protein is FMN-dependent NADH:quinone oxidoreductase 1.